We begin with the raw amino-acid sequence, 359 residues long: tRNA/tmRNA (uracil-C(5))-methyltransferase (359 aa).

The S-adenosyl-L-methionine site is built by glutamine 183, tyrosine 211, asparagine 216, glutamate 232, and aspartate 292. The active-site Nucleophile is the cysteine 317. Glutamate 351 functions as the Proton acceptor in the catalytic mechanism.

The protein belongs to the class I-like SAM-binding methyltransferase superfamily. RNA M5U methyltransferase family. TrmA subfamily.

The catalysed reaction is uridine(54) in tRNA + S-adenosyl-L-methionine = 5-methyluridine(54) in tRNA + S-adenosyl-L-homocysteine + H(+). The enzyme catalyses uridine(341) in tmRNA + S-adenosyl-L-methionine = 5-methyluridine(341) in tmRNA + S-adenosyl-L-homocysteine + H(+). Its function is as follows. Dual-specificity methyltransferase that catalyzes the formation of 5-methyluridine at position 54 (m5U54) in all tRNAs, and that of position 341 (m5U341) in tmRNA (transfer-mRNA). The sequence is that of tRNA/tmRNA (uracil-C(5))-methyltransferase from Pseudomonas fluorescens (strain ATCC BAA-477 / NRRL B-23932 / Pf-5).